We begin with the raw amino-acid sequence, 172 residues long: Peptide methionine sulfoxide reductase MsrA (172 aa).

The active site involves C14.

It belongs to the MsrA Met sulfoxide reductase family.

It catalyses the reaction L-methionyl-[protein] + [thioredoxin]-disulfide + H2O = L-methionyl-(S)-S-oxide-[protein] + [thioredoxin]-dithiol. The enzyme catalyses [thioredoxin]-disulfide + L-methionine + H2O = L-methionine (S)-S-oxide + [thioredoxin]-dithiol. Functionally, has an important function as a repair enzyme for proteins that have been inactivated by oxidation. Catalyzes the reversible oxidation-reduction of methionine sulfoxide in proteins to methionine. The protein is Peptide methionine sulfoxide reductase MsrA of Streptomyces coelicolor (strain ATCC BAA-471 / A3(2) / M145).